Consider the following 250-residue polypeptide: MSETAQTTVDQSEVDRFSAMAAEWWSPTGKFRPLHKFNPVRLEYIRNRVCENFGRNPKAHRPLEGLRVLDIGCGGGLLSEPVARMGATVVGADPSEKNIGIASTHARESGVSVDYRAVTAEQLQEAGESFDVILNMEVVEHVANVDLFVTTCAKMVRPGGLMFAATINRTLKARALAIFAAENVLRWLPRGTHQYEKLVRPEELERPIVASGMDIIHRTGVFYNVLQDRWNLSPDMEVNYMMMAKRPAAA.

R41, G72, D93, and M136 together coordinate S-adenosyl-L-methionine.

Belongs to the methyltransferase superfamily. UbiG/COQ3 family.

It carries out the reaction a 3-demethylubiquinol + S-adenosyl-L-methionine = a ubiquinol + S-adenosyl-L-homocysteine + H(+). The enzyme catalyses a 3-(all-trans-polyprenyl)benzene-1,2-diol + S-adenosyl-L-methionine = a 2-methoxy-6-(all-trans-polyprenyl)phenol + S-adenosyl-L-homocysteine + H(+). Its pathway is cofactor biosynthesis; ubiquinone biosynthesis. O-methyltransferase that catalyzes the 2 O-methylation steps in the ubiquinone biosynthetic pathway. This chain is Ubiquinone biosynthesis O-methyltransferase, found in Agrobacterium fabrum (strain C58 / ATCC 33970) (Agrobacterium tumefaciens (strain C58)).